A 496-amino-acid polypeptide reads, in one-letter code: NADH-quinone oxidoreductase subunit N (496 aa).

14 consecutive transmembrane segments (helical) span residues 12–32 (LNLI…IILI), 43–63 (SLYV…TLGL), 79–99 (VSIV…PLAL), 108–128 (SYPE…FMVA), 132–152 (LILI…LIAL), 166–186 (FTMG…IYAL), 207–227 (GLMI…AFKL), 257–277 (VAAF…GVEW), 280–300 (VVIL…ALVQ), 306–326 (MLAY…ALDT), 333–353 (IFFY…MLWM), 383–403 (AVIM…SIFW), 416–436 (GYVW…YYYL), and 464–484 (AVVG…QPLV).

Belongs to the complex I subunit 2 family. NDH-1 is composed of 14 different subunits. Subunits NuoA, H, J, K, L, M, N constitute the membrane sector of the complex.

The protein localises to the cell inner membrane. The catalysed reaction is a quinone + NADH + 5 H(+)(in) = a quinol + NAD(+) + 4 H(+)(out). Functionally, NDH-1 shuttles electrons from NADH, via FMN and iron-sulfur (Fe-S) centers, to quinones in the respiratory chain. The immediate electron acceptor for the enzyme in this species is believed to be ubiquinone. Couples the redox reaction to proton translocation (for every two electrons transferred, four hydrogen ions are translocated across the cytoplasmic membrane), and thus conserves the redox energy in a proton gradient. In Sulfurovum sp. (strain NBC37-1), this protein is NADH-quinone oxidoreductase subunit N.